Here is a 308-residue protein sequence, read N- to C-terminus: Ribosomal RNA large subunit methyltransferase F (308 aa).

This sequence belongs to the methyltransferase superfamily. METTL16/RlmF family.

It is found in the cytoplasm. The catalysed reaction is adenosine(1618) in 23S rRNA + S-adenosyl-L-methionine = N(6)-methyladenosine(1618) in 23S rRNA + S-adenosyl-L-homocysteine + H(+). Specifically methylates the adenine in position 1618 of 23S rRNA. This Shigella flexneri serotype 5b (strain 8401) protein is Ribosomal RNA large subunit methyltransferase F.